We begin with the raw amino-acid sequence, 486 residues long: UDP-N-acetylmuramate--L-alanine ligase (486 aa).

126–132 (GTHGKTS) provides a ligand contact to ATP.

It belongs to the MurCDEF family.

It localises to the cytoplasm. It carries out the reaction UDP-N-acetyl-alpha-D-muramate + L-alanine + ATP = UDP-N-acetyl-alpha-D-muramoyl-L-alanine + ADP + phosphate + H(+). The protein operates within cell wall biogenesis; peptidoglycan biosynthesis. Functionally, cell wall formation. The protein is UDP-N-acetylmuramate--L-alanine ligase of Buchnera aphidicola subsp. Baizongia pistaciae (strain Bp).